A 598-amino-acid chain; its full sequence is Probable translation initiation factor IF-2 (598 aa).

The tr-type G domain maps to 3 to 225; it reads LRCPIVSVLG…GLAQKFLEQK (223 aa). The segment at 12 to 19 is G1; the sequence is GHVDHGKT. 12–19 contacts GTP; the sequence is GHVDHGKT. Residues 37-41 form a G2 region; sequence GITQH. The interval 76-79 is G3; sequence DTPG. Residues 76–80 and 130–133 each bind GTP; these read DTPGH and NKLD. Residues 130–133 are G4; it reads NKLD. Residues 200–202 form a G5 region; it reads SAI.

It belongs to the TRAFAC class translation factor GTPase superfamily. Classic translation factor GTPase family. IF-2 subfamily.

Function in general translation initiation by promoting the binding of the formylmethionine-tRNA to ribosomes. Seems to function along with eIF-2. The sequence is that of Probable translation initiation factor IF-2 from Methanococcus vannielii (strain ATCC 35089 / DSM 1224 / JCM 13029 / OCM 148 / SB).